The primary structure comprises 335 residues: Methyltransferase pgmE (335 aa).

It belongs to the methyltransferase superfamily.

It participates in pigment biosynthesis. The protein operates within secondary metabolite biosynthesis. In terms of biological role, methyltransferase; part of the gene cluster that mediates the biosynthesis of pleosporalin A, ascomycone A, as well as a third cryptic naphthoquinone derived pigment, all responsible for the coloration of conidia. Essential for the production of pleosporalin A, but not the 2 other final products. The pathway begins with the biosynthesis of the cyclized heptaketide 3-acetonyl-1,6,8-trihydroxy-2-naphthaldehyde by the NR-PKS pgmA. The C-6 hydroxyl group is further methylated by the O-methyltransferase pgmB to yield fusarubinaldehyde which is in turn oxidized by the cytochrome P450 monooxygenase pgmC at C-9. The C-1 hydroxyl group is then methylated spontaneously. Although pgmE, pgmD and pgmH are essential for the production of pleosporalin A, it is not the case for the 2 other final products and it remains difficult to assign a specific function to each enzyme. PgmF and pgmG seem not to be involved in pigment biosynthesis although they were regulated by the cluster-specific transcription factor pgmR. This Aspergillus terreus (strain NIH 2624 / FGSC A1156) protein is Methyltransferase pgmE.